The primary structure comprises 193 residues: Superoxide dismutase [Fe] (193 aa).

Fe cation-binding residues include H27, H74, D157, and H161.

The protein belongs to the iron/manganese superoxide dismutase family. In terms of assembly, homodimer. Fe cation serves as cofactor.

It catalyses the reaction 2 superoxide + 2 H(+) = H2O2 + O2. In terms of biological role, destroys superoxide anion radicals which are normally produced within the cells and which are toxic to biological systems. Partially complements double sodA-sodB deletions in E.coli. The sequence is that of Superoxide dismutase [Fe] from Pseudomonas aeruginosa (strain ATCC 15692 / DSM 22644 / CIP 104116 / JCM 14847 / LMG 12228 / 1C / PRS 101 / PAO1).